The sequence spans 168 residues: GTP-dependent dephospho-CoA kinase (168 aa).

GTP-binding residues include aspartate 40, valine 41, valine 42, aspartate 59, and glutamate 112.

Belongs to the GTP-dependent DPCK family.

It catalyses the reaction 3'-dephospho-CoA + GTP = GDP + CoA + H(+). It functions in the pathway cofactor biosynthesis; coenzyme A biosynthesis. Its function is as follows. Catalyzes the GTP-dependent phosphorylation of the 3'-hydroxyl group of dephosphocoenzyme A to form coenzyme A (CoA). The sequence is that of GTP-dependent dephospho-CoA kinase from Methanoregula boonei (strain DSM 21154 / JCM 14090 / 6A8).